A 421-amino-acid chain; its full sequence is Fasciclin-like arabinogalactan protein ARB_02922 (421 aa).

The N-terminal stretch at 1–17 is a signal peptide; it reads MLLYYILVALWATVTYA. 2 consecutive FAS1 domains span residues 18–167 and 169–296; these read KSFS…DRPL and LPQS…SDVL. N-linked (GlcNAc...) asparagine glycans are attached at residues Asn-52, Asn-75, Asn-80, Asn-120, Asn-145, Asn-181, Asn-223, and Asn-300. Residues 300 to 401 form a disordered region; it reads NDTAKPVPNA…NTPQPGAAAT (102 aa). 2 stretches are compositionally biased toward gly residues: residues 344-356 and 372-387; these read TSGGEGGGGGGGE and SGGGGGGGGGAGGGPG. Residues 388–401 show a composition bias toward low complexity; that stretch reads PTATNTPQPGAAAT. The GPI-anchor amidated glycine moiety is linked to residue Gly-397. A propeptide spans 398 to 421 (removed in mature form); it reads AAATERAKAGLAAVVGLGVVLINA.

It belongs to the fasciclin-like AGP family.

It is found in the cell membrane. Functionally, may be a cell surface adhesion protein. The protein is Fasciclin-like arabinogalactan protein ARB_02922 of Arthroderma benhamiae (strain ATCC MYA-4681 / CBS 112371) (Trichophyton mentagrophytes).